Reading from the N-terminus, the 613-residue chain is MGQKGHKDSLYPCGGTPESSLHEALDQCMTALDLFLTNQFSEALSYLKPRTKESMYHSLTYATILEMQAMMTFDPQDILLAGNMMKEAQMLCQRHRRKSSVTDSFSSLVNRPTLGQFTEEEIHAEVCYAECLLQRAALTFLQGSSHGGAVRPRALHDPSHACSCPPGPGRQHLFLLQDENMVSFIKGGIKVRNSYQTYKELDSLVQSSQYCKGENHPHFEGGVKLGVGAFNLTLSMLPTRILRLLEFVGFSGNKDYGLLQLEEGASGHSFRSVLCVMLLLCYHTFLTFVLGTGNVNIEEAEKLLKPYLNRYPKGAIFLFFAGRIEVIKGNIDAAIRRFEECCEAQQHWKQFHHMCYWELMWCFTYKGQWKMSYFYADLLSKENCWSKATYIYMKAAYLSMFGKEDHKPFGDDEVELFRAVPGLKLKIAGKSLPTEKFAIRKSRRYFSSNPISLPVPALEMMYIWNGYAVIGKQPKLTDGILEIITKAEEMLEKGPENEYSVDDECLVKLLKGLCLKYLGRVQEAEENFRSISANEKKIKYDHYLIPNALLELALLLMEQDRNEEAIKLLESAKQNYKNYSMESRTHFRIQAATLQAKSSLENSSRSMVSSVSL.

3 TPR repeats span residues 315 to 348 (AIFL…QQHW), 505 to 538 (CLVK…EKKI), and 546 to 579 (PNAL…YKNY).

Belongs to the TTC39 family.

The protein is Tetratricopeptide repeat protein 39A (TTC39A) of Homo sapiens (Human).